Here is a 256-residue protein sequence, read N- to C-terminus: Hydroxyethylthiazole kinase (256 aa).

M38 contributes to the substrate binding site. The ATP site is built by T114 and T159. G186 is a substrate binding site.

Belongs to the Thz kinase family. Mg(2+) serves as cofactor.

It catalyses the reaction 5-(2-hydroxyethyl)-4-methylthiazole + ATP = 4-methyl-5-(2-phosphooxyethyl)-thiazole + ADP + H(+). Its pathway is cofactor biosynthesis; thiamine diphosphate biosynthesis; 4-methyl-5-(2-phosphoethyl)-thiazole from 5-(2-hydroxyethyl)-4-methylthiazole: step 1/1. Catalyzes the phosphorylation of the hydroxyl group of 4-methyl-5-beta-hydroxyethylthiazole (THZ). This is Hydroxyethylthiazole kinase from Streptococcus agalactiae serotype V (strain ATCC BAA-611 / 2603 V/R).